The following is a 338-amino-acid chain: Glycerol-3-phosphate dehydrogenase [NAD(P)+] (338 aa).

Residues Ser-14, Tyr-15, His-35, and Lys-109 each contribute to the NADPH site. Residues Lys-109, Gly-138, and Thr-140 each coordinate sn-glycerol 3-phosphate. An NADPH-binding site is contributed by Ala-142. The sn-glycerol 3-phosphate site is built by Lys-194, Asp-247, Ser-257, Arg-258, and Asn-259. The Proton acceptor role is filled by Lys-194. An NADPH-binding site is contributed by Arg-258. Residues Val-282 and Glu-284 each coordinate NADPH.

It belongs to the NAD-dependent glycerol-3-phosphate dehydrogenase family.

It localises to the cytoplasm. The catalysed reaction is sn-glycerol 3-phosphate + NAD(+) = dihydroxyacetone phosphate + NADH + H(+). It catalyses the reaction sn-glycerol 3-phosphate + NADP(+) = dihydroxyacetone phosphate + NADPH + H(+). It participates in membrane lipid metabolism; glycerophospholipid metabolism. Its function is as follows. Catalyzes the reduction of the glycolytic intermediate dihydroxyacetone phosphate (DHAP) to sn-glycerol 3-phosphate (G3P), the key precursor for phospholipid synthesis. The sequence is that of Glycerol-3-phosphate dehydrogenase [NAD(P)+] from Shewanella baltica (strain OS185).